The chain runs to 134 residues: Citrolysin protein 2 (134 aa).

The chain is Citrolysin protein 2 from Citrobacter freundii.